We begin with the raw amino-acid sequence, 463 residues long: tRNA (guanine(10)-N(2))-methyltransferase TRMT11 (463 aa).

An N-acetylalanine modification is found at Ala-2.

Belongs to the class I-like SAM-binding methyltransferase superfamily. TRM11 methyltransferase family. As to quaternary structure, part of the heterodimeric TRMT11-TRM112 methyltransferase complex; this complex forms an active tRNA methyltransferase, where TRMT112 acts as an activator of the catalytic subunit TRMT11.

It localises to the cytoplasm. The catalysed reaction is guanosine(10) in tRNA + S-adenosyl-L-methionine = N(2)-methylguanosine(10) in tRNA + S-adenosyl-L-homocysteine + H(+). Its function is as follows. Catalytic subunit of the TRMT11-TRM112 methyltransferase complex, that specifically mediates the S-adenosyl-L-methionine-dependent N(2)-methylation of guanosine nucleotide at position 10 (m2G10) in tRNAs. This is one of the major tRNA (guanine-N(2))-methyltransferases. This Rattus norvegicus (Rat) protein is tRNA (guanine(10)-N(2))-methyltransferase TRMT11.